Reading from the N-terminus, the 159-residue chain is 6,7-dimethyl-8-ribityllumazine synthase (159 aa).

Residues Trp-28, 59-61, and 81-83 each bind 5-amino-6-(D-ribitylamino)uracil; these read ALE and CVI. 86–87 contributes to the (2S)-2-hydroxy-3-oxobutyl phosphate binding site; sequence GT. His-89 (proton donor) is an active-site residue. Asn-114 provides a ligand contact to 5-amino-6-(D-ribitylamino)uracil. Arg-128 is a (2S)-2-hydroxy-3-oxobutyl phosphate binding site.

Belongs to the DMRL synthase family.

The enzyme catalyses (2S)-2-hydroxy-3-oxobutyl phosphate + 5-amino-6-(D-ribitylamino)uracil = 6,7-dimethyl-8-(1-D-ribityl)lumazine + phosphate + 2 H2O + H(+). The protein operates within cofactor biosynthesis; riboflavin biosynthesis; riboflavin from 2-hydroxy-3-oxobutyl phosphate and 5-amino-6-(D-ribitylamino)uracil: step 1/2. In terms of biological role, catalyzes the formation of 6,7-dimethyl-8-ribityllumazine by condensation of 5-amino-6-(D-ribitylamino)uracil with 3,4-dihydroxy-2-butanone 4-phosphate. This is the penultimate step in the biosynthesis of riboflavin. This is 6,7-dimethyl-8-ribityllumazine synthase from Corynebacterium kroppenstedtii (strain DSM 44385 / JCM 11950 / CIP 105744 / CCUG 35717).